A 55-amino-acid polypeptide reads, in one-letter code: Conotoxin vc5b (55 aa).

An N-terminal signal peptide occupies residues 1–15 (VILLLLIASAPSVDA). Positions 16–41 (QPKTKDDVPLAPLHDNAKSALQHLNQ) are excised as a propeptide. Gln53 is subject to Glutamine amide.

Post-translationally, contains 2 disulfide bonds that can be either 'C1-C3, C2-C4' or 'C1-C4, C2-C3', since these disulfide connectivities have been observed for conotoxins with cysteine framework V (for examples, see AC P0DQQ7 and AC P81755). Expressed by the venom duct.

Its subcellular location is the secreted. The sequence is that of Conotoxin vc5b from Conus victoriae (Queen Victoria cone).